The chain runs to 349 residues: Phosphoribosylformylglycinamidine cyclo-ligase (349 aa).

It belongs to the AIR synthase family.

It is found in the cytoplasm. The catalysed reaction is 2-formamido-N(1)-(5-O-phospho-beta-D-ribosyl)acetamidine + ATP = 5-amino-1-(5-phospho-beta-D-ribosyl)imidazole + ADP + phosphate + H(+). It functions in the pathway purine metabolism; IMP biosynthesis via de novo pathway; 5-amino-1-(5-phospho-D-ribosyl)imidazole from N(2)-formyl-N(1)-(5-phospho-D-ribosyl)glycinamide: step 2/2. The polypeptide is Phosphoribosylformylglycinamidine cyclo-ligase (Lactobacillus helveticus (strain DPC 4571)).